The following is a 314-amino-acid chain: Mitochondrial 2-oxoglutarate/malate carrier protein (314 aa).

Alanine 2 is modified (N-acetylalanine). The residue at position 6 (serine 6) is a Phosphoserine. Solcar repeat units follow at residues 23 to 108 (VKFL…LFER), 117 to 208 (PGFL…SKQF), and 217 to 306 (DNIL…MNKA). Residues 24–42 (KFLFGGLAGMGATVFVQPL) traverse the membrane as a helical segment. Lysine 57 carries the N6-succinyllysine modification. Lysine 73 carries the post-translational modification N6-acetyllysine. Residues 83 to 101 (GLSAGLLRQATYTTTRLGI) form a helical membrane-spanning segment. Position 102 is a phosphotyrosine (tyrosine 102). Transmembrane regions (helical) follow at residues 119-140 (FLLKALIGMTAGATGAFVGPPA), 183-202 (GCIPTMARAVVVNAAQLASY), and 222-240 (HFCAIMISGLVTTAASMPV). At lysine 256 the chain carries N6-acetyllysine. Residues 281 to 300 (GFTPYYARLGPHTVLTFIFL) form a helical membrane-spanning segment.

Belongs to the mitochondrial carrier (TC 2.A.29) family. Interacts with SMIM26. Expressed in liver, heart and brain.

It is found in the mitochondrion inner membrane. It catalyses the reaction (S)-malate(in) + 2-oxoglutarate(out) = (S)-malate(out) + 2-oxoglutarate(in). It carries out the reaction malonate(in) + 2-oxoglutarate(out) = malonate(out) + 2-oxoglutarate(in). The catalysed reaction is succinate(in) + 2-oxoglutarate(out) = succinate(out) + 2-oxoglutarate(in). The enzyme catalyses maleate(in) + 2-oxoglutarate(out) = maleate(out) + 2-oxoglutarate(in). It catalyses the reaction oxaloacetate(in) + 2-oxoglutarate(out) = oxaloacetate(out) + 2-oxoglutarate(in). Catalyzes the transport of 2-oxoglutarate (alpha-oxoglutarate) across the inner mitochondrial membrane in an electroneutral exchange for malate. Can also exchange 2-oxoglutarate for other dicarboxylic acids such as malonate, succinate, maleate and oxaloacetate, although with lower affinity. Contributes to several metabolic processes, including the malate-aspartate shuttle, the oxoglutarate/isocitrate shuttle, in gluconeogenesis from lactate, and in nitrogen metabolism. Maintains mitochondrial fusion and fission events, and the organization and morphology of cristae. Involved in the regulation of apoptosis. Helps protect from cytotoxic-induced apoptosis by modulating glutathione levels in mitochondria. The sequence is that of Mitochondrial 2-oxoglutarate/malate carrier protein (Slc25a11) from Rattus norvegicus (Rat).